We begin with the raw amino-acid sequence, 471 residues long: Coagulation factor IX (471 aa).

The signal sequence occupies residues 1 to 28 (MKHLNTVMAESPALITIFLLGYLLSTEC). A propeptide spanning residues 29–46 (AVFLDRENATKILTRPKR) is cleaved from the precursor. Positions 47, 48, 53, 54, 61, 63, 66, 67, 72, 73, and 76 each coordinate Ca(2+). The 46-residue stretch at 47-92 (YNSGKLEEFVRGNLERECIEERCSFEEAREVFENTEKTTEFWKQYV) folds into the Gla domain. Glu-53, Glu-54, Glu-61, Glu-63, Glu-66, Glu-67, Glu-72, Glu-73, Glu-76, Glu-79, and Glu-82 each carry 4-carboxyglutamate. Glu-61 contributes to the Mg(2+) binding site. Cys-64 and Cys-69 form a disulfide bridge. Glu-66 is a Mg(2+) binding site. Glu-72 provides a ligand contact to Mg(2+). Glu-76 is a binding site for Mg(2+). A Ca(2+)-binding site is contributed by Glu-82. Mg(2+) is bound at residue Glu-82. O-linked (GalNAc...) threonine glycosylation is present at Thr-85. Ca(2+) contacts are provided by Glu-86, Asp-93, Gly-94, and Gln-96. A 4-carboxyglutamate modification is found at Glu-86. Residue Glu-86 participates in Mg(2+) binding. The EGF-like 1; calcium-binding domain occupies 93–129 (DGDQCESNPCLNGGICKDDISSYECWCQVGFEGRNCE). 10 disulfides stabilise this stretch: Cys-97–Cys-108, Cys-102–Cys-117, Cys-119–Cys-128, Cys-134–Cys-145, Cys-141–Cys-155, Cys-157–Cys-170, Cys-178–Cys-345, Cys-262–Cys-278, Cys-392–Cys-406, and Cys-417–Cys-445. A glycan (O-linked (Glc...) serine) is linked at Ser-99. The Ca(2+) site is built by Asp-110 and Asp-111. Residue Asp-110 is modified to (3R)-3-hydroxyaspartate. Ser-114 carries the phosphoserine modification. Residues 130 to 171 (LDATCNIKNGRCKQFCKNSPDNKVICSCTEGYQLAEDQKSCE) enclose the EGF-like 2 domain. A propeptide spans 193-236 (AETVFSNMDYENSTEAVFIQDDITDGAILNNVTESSESLNDFTR) (activation peptide). The residue at position 202 (Tyr-202) is a Sulfotyrosine. The N-linked (GlcNAc...) asparagine glycan is linked to Asn-204. Position 205 is a phosphoserine (Ser-205). Thr-206 is subject to Phosphothreonine; alternate. The O-linked (GalNAc...) threonine; alternate glycan is linked to Thr-206. A glycan (N-linked (GlcNAc...) asparagine) is linked at Asn-223. O-linked (GalNAc...) threonine glycosylation is found at Thr-225 and Thr-235. The 233-residue stretch at 237-469 (VVGGENAKPG…YVNWIKEKTK (233 aa)) folds into the Peptidase S1 domain. Catalysis depends on His-277, which acts as the Charge relay system. 4 residues coordinate Ca(2+): Glu-291, Asn-293, Glu-298, and Glu-301. Asp-325 acts as the Charge relay system in catalysis. The active-site Charge relay system is Ser-421.

This sequence belongs to the peptidase S1 family. Heterodimer of a light chain and a heavy chain; disulfide-linked. Interacts (inactive and activated) with F11 (activated) in calcium-dependent manner. Interacts with SERPINC1. Post-translationally, activated by factor XIa, which excises the activation peptide. The propeptide can also be removed by snake venom protease. Activated by coagulation factor VIIa-tissue factor (F7-F3) complex in calcium-dependent manner. The iron and 2-oxoglutarate dependent 3-hydroxylation of aspartate and asparagine is (R) stereospecific within EGF domains. In terms of processing, predominantly O-glucosylated at Ser-99 by POGLUT1 in vitro. Detected in liver.

It localises to the secreted. The enzyme catalyses Selective cleavage of Arg-|-Ile bond in factor X to form factor Xa.. Functionally, factor IX is a vitamin K-dependent plasma protein that participates in the intrinsic pathway of blood coagulation by converting factor X to its active form in the presence of Ca(2+) ions, phospholipids, and factor VIIIa. The polypeptide is Coagulation factor IX (F9) (Mus musculus (Mouse)).